The following is a 627-amino-acid chain: Phosphomethylpyrimidine synthase (627 aa).

A disordered region spans residues 1–21 (MSVQSNKNLSESAQVDQQSIQ). Substrate contacts are provided by residues Asn-231, Met-260, Tyr-289, His-325, 345–347 (SRG), 386–389 (DGLR), and Glu-425. His-429 contributes to the Zn(2+) binding site. Tyr-452 is a binding site for substrate. A Zn(2+)-binding site is contributed by His-493. Positions 573, 576, and 581 each coordinate [4Fe-4S] cluster.

It belongs to the ThiC family. In terms of assembly, homodimer. Requires [4Fe-4S] cluster as cofactor.

It carries out the reaction 5-amino-1-(5-phospho-beta-D-ribosyl)imidazole + S-adenosyl-L-methionine = 4-amino-2-methyl-5-(phosphooxymethyl)pyrimidine + CO + 5'-deoxyadenosine + formate + L-methionine + 3 H(+). The protein operates within cofactor biosynthesis; thiamine diphosphate biosynthesis. In terms of biological role, catalyzes the synthesis of the hydroxymethylpyrimidine phosphate (HMP-P) moiety of thiamine from aminoimidazole ribotide (AIR) in a radical S-adenosyl-L-methionine (SAM)-dependent reaction. The polypeptide is Phosphomethylpyrimidine synthase (Stutzerimonas stutzeri (strain A1501) (Pseudomonas stutzeri)).